Here is a 181-residue protein sequence, read N- to C-terminus: Large ribosomal subunit protein uL6 (181 aa).

Belongs to the universal ribosomal protein uL6 family. In terms of assembly, part of the 50S ribosomal subunit.

In terms of biological role, this protein binds to the 23S rRNA, and is important in its secondary structure. It is located near the subunit interface in the base of the L7/L12 stalk, and near the tRNA binding site of the peptidyltransferase center. The protein is Large ribosomal subunit protein uL6 of Hydrogenobaculum sp. (strain Y04AAS1).